A 702-amino-acid polypeptide reads, in one-letter code: Polynucleotide 5'-hydroxyl-kinase NOL9 (702 aa).

Ala2 carries the post-translational modification N-acetylalanine. The short motif at 31-47 (RRPRRRLGSLRWCGRRR) is the Nucleolar localization signal element. Residues 69-101 (VSRAAAARRPNTATPSPIPSPTPASEPESEPEL) form a disordered region. Low complexity predominate over residues 71-83 (RAAAARRPNTATP). 306–313 (GSQDVGKS) is a binding site for ATP. The interval 480 to 702 (FADEEKESPV…RRPKFCRKMK (223 aa)) is interaction with LAS1L. A Glycyl lysine isopeptide (Lys-Gly) (interchain with G-Cter in SUMO2) cross-link involves residue Lys485. A Phosphoserine modification is found at Ser487. Residues 680 to 689 (AREPEEAHKE) are compositionally biased toward basic and acidic residues. A disordered region spans residues 680–702 (AREPEEAHKEKPYRRPKFCRKMK). Residues 690–702 (KPYRRPKFCRKMK) show a composition bias toward basic residues.

This sequence belongs to the Clp1 family. NOL9/GRC3 subfamily. As to quaternary structure, interacts with PELP1, WDR18 and SENP3. Interacts with LAS1L to form an ITS2 pre-rRNA endonuclease-kinase complex.

It localises to the nucleus. Its subcellular location is the nucleolus. It carries out the reaction a 5'-end dephospho-2'-deoxyribonucleoside-DNA + ATP = a 5'-end 5'-phospho-2'-deoxyribonucleoside-DNA + ADP + H(+). The enzyme catalyses a 5'-end dephospho-ribonucleoside-RNA + ATP = a 5'-end 5'-phospho-ribonucleoside-RNA + ADP + H(+). In terms of biological role, polynucleotide kinase that can phosphorylate the 5'-hydroxyl groups of single-stranded and double-stranded RNA and DNA substrates. Involved in rRNA processing and its kinase activity is required for the processing of the 32S precursor into 5.8S and 28S rRNAs, more specifically for the generation of the major 5.8S(S) form. Required for the efficient pre-rRNA processing of internal transcribed spacer 2 (ITS2). Associates with LAS1L to form an ITS2 pre-rRNA endonuclease-kinase complex and is responsible for the transport of this complex into the nucleolus. This is Polynucleotide 5'-hydroxyl-kinase NOL9 (NOL9) from Homo sapiens (Human).